The following is a 264-amino-acid chain: Synaptophysin-like protein 2 (264 aa).

Residues 1–33 (MSSTESPSRAADKSPRQQVDRLLEGLRWRRLEE) lie on the Cytoplasmic side of the membrane. The 209-residue stretch at 30–238 (RLEEPLGFIK…NCWFVFKETP (209 aa)) folds into the MARVEL domain. A helical membrane pass occupies residues 34-54 (PLGFIKVLQWLFAIFAFGSCG). At 55–116 (SYSGETGAMV…LMGDFSAPAE (62 aa)) the chain is on the vesicular side. Residues 117 to 137 (FFVTLGIFSFFYTMAALVVYL) traverse the membrane as a helical segment. Over 138 to 150 (RFHKLYTENKRFP) the chain is Cytoplasmic. The chain crosses the membrane as a helical span at residues 151-171 (LVDFCVTVSFTFFWLVAAAAW). Over 172–213 (GKGLTDVKGATRPSSLTAAMSVCHGEEAVCSAGATPSMGLAN) the chain is Vesicular. A glycan (N-linked (GlcNAc...) asparagine) is linked at Asn213. Residues 214–234 (ISVLFGFINFFLWAGNCWFVF) traverse the membrane as a helical segment. The Cytoplasmic segment spans residues 235–264 (KETPWHGQGQDQGQGPSQESAAEQGAVEKQ). Positions 242–264 (QGQDQGQGPSQESAAEQGAVEKQ) are disordered.

It belongs to the synaptophysin/synaptobrevin family. In terms of tissue distribution, skeletal muscle.

It is found in the membrane. Functionally, involved in communication between the T-tubular and junctional sarcoplasmic reticulum (SR) membranes. The chain is Synaptophysin-like protein 2 (SYPL2) from Oryctolagus cuniculus (Rabbit).